The sequence spans 288 residues: Pyridoxal kinase PdxY (288 aa).

Residues Ser-9 and 44–45 (TQ) each bind substrate. ATP-binding residues include Asp-111, Glu-148, and Lys-181. Asp-224 provides a ligand contact to substrate.

This sequence belongs to the pyridoxine kinase family. PdxY subfamily. As to quaternary structure, homodimer. Mg(2+) is required as a cofactor.

It catalyses the reaction pyridoxal + ATP = pyridoxal 5'-phosphate + ADP + H(+). It participates in cofactor metabolism; pyridoxal 5'-phosphate salvage; pyridoxal 5'-phosphate from pyridoxal: step 1/1. Pyridoxal kinase involved in the salvage pathway of pyridoxal 5'-phosphate (PLP). Catalyzes the phosphorylation of pyridoxal to PLP. The protein is Pyridoxal kinase PdxY of Haemophilus influenzae (strain ATCC 51907 / DSM 11121 / KW20 / Rd).